The primary structure comprises 122 residues: Large ribosomal subunit protein uL14 (122 aa).

This sequence belongs to the universal ribosomal protein uL14 family. As to quaternary structure, part of the 50S ribosomal subunit. Forms a cluster with proteins L3 and L19. In the 70S ribosome, L14 and L19 interact and together make contacts with the 16S rRNA in bridges B5 and B8.

Binds to 23S rRNA. Forms part of two intersubunit bridges in the 70S ribosome. In Rhodospirillum centenum (strain ATCC 51521 / SW), this protein is Large ribosomal subunit protein uL14.